The chain runs to 179 residues: Inner membrane-spanning protein YciB (179 aa).

The next 5 helical transmembrane spans lie at 22-42 (IYAA…YTWI), 50-70 (MALI…FFHN), 76-96 (WKVT…QWVM), 121-141 (IAWA…AFWM), and 149-169 (FKVF…GVYI).

It belongs to the YciB family.

It localises to the cell inner membrane. Plays a role in cell envelope biogenesis, maintenance of cell envelope integrity and membrane homeostasis. In Enterobacter sp. (strain 638), this protein is Inner membrane-spanning protein YciB.